The following is a 274-amino-acid chain: Protein RecA (274 aa).

Position 43 to 50 (Gly43 to Thr50) interacts with ATP.

Belongs to the RecA family.

Its subcellular location is the cytoplasm. Can catalyze the hydrolysis of ATP in the presence of single-stranded DNA, the ATP-dependent uptake of single-stranded DNA by duplex DNA, and the ATP-dependent hybridization of homologous single-stranded DNAs. It interacts with LexA causing its activation and leading to its autocatalytic cleavage. The polypeptide is Protein RecA (Neisseria flavescens).